The primary structure comprises 36 residues: Termicin (36 aa).

3 cysteine pairs are disulfide-bonded: cysteine 2/cysteine 24, cysteine 7/cysteine 29, and cysteine 11/cysteine 31. At glycine 36 the chain carries Glycine amide.

Expressed in salivary glands and hemocytes.

It is found in the secreted. In terms of biological role, weak activity against Gram-positive bacteria B.megaterium, S.pyogenes and M.luteus, strong activity against yeasts C.albicans, C.neoformans and S.cerevisiae and filamentous fungi F.oxysporum, F.culmorum, N.crassa and N.hematococca. Less active against filamentous fungus T.viride. Inactive against Gram-positive bacteria A.viridans and S.aureus, filamentous fungi A.fumigatus and B.bassiana and yeast C.glabrata. This Pseudacanthotermes spiniger protein is Termicin.